Here is a 542-residue protein sequence, read N- to C-terminus: CTP synthase (542 aa).

An amidoligase domain region spans residues 1–265 (MARYVFITGG…DDEVLAAFGI (265 aa)). Serine 13 lines the CTP pocket. Serine 13 is a binding site for UTP. ATP is bound by residues 14–19 (SLGKGI) and aspartate 71. Mg(2+) is bound by residues aspartate 71 and glutamate 139. CTP is bound by residues 146-148 (DIE), 186-191 (KTKPTQ), and lysine 222. Residues 186–191 (KTKPTQ) and lysine 222 contribute to the UTP site. One can recognise a Glutamine amidotransferase type-1 domain in the interval 291–541 (TIAIVGKYTG…IEAATEQSRL (251 aa)). Glycine 353 is a binding site for L-glutamine. Cysteine 380 (nucleophile; for glutamine hydrolysis) is an active-site residue. L-glutamine contacts are provided by residues 381–384 (FGMQ), glutamate 404, and arginine 469. Catalysis depends on residues histidine 514 and glutamate 516.

This sequence belongs to the CTP synthase family. As to quaternary structure, homotetramer.

The enzyme catalyses UTP + L-glutamine + ATP + H2O = CTP + L-glutamate + ADP + phosphate + 2 H(+). It catalyses the reaction L-glutamine + H2O = L-glutamate + NH4(+). It carries out the reaction UTP + NH4(+) + ATP = CTP + ADP + phosphate + 2 H(+). It participates in pyrimidine metabolism; CTP biosynthesis via de novo pathway; CTP from UDP: step 2/2. Allosterically activated by GTP, when glutamine is the substrate; GTP has no effect on the reaction when ammonia is the substrate. The allosteric effector GTP functions by stabilizing the protein conformation that binds the tetrahedral intermediate(s) formed during glutamine hydrolysis. Inhibited by the product CTP, via allosteric rather than competitive inhibition. Catalyzes the ATP-dependent amination of UTP to CTP with either L-glutamine or ammonia as the source of nitrogen. Regulates intracellular CTP levels through interactions with the four ribonucleotide triphosphates. This is CTP synthase from Rhizobium leguminosarum bv. trifolii (strain WSM2304).